The sequence spans 594 residues: UvrABC system protein C (594 aa).

The GIY-YIG domain maps to 14–91; it reads DQPGCYLMKD…IKKYDPKYNI (78 aa). The region spanning 196–231 is the UVR domain; it reads KEVRSELEIKMYEASEKLEFERAKELRDQIAHIDAI.

Belongs to the UvrC family. As to quaternary structure, interacts with UvrB in an incision complex.

It is found in the cytoplasm. In terms of biological role, the UvrABC repair system catalyzes the recognition and processing of DNA lesions. UvrC both incises the 5' and 3' sides of the lesion. The N-terminal half is responsible for the 3' incision and the C-terminal half is responsible for the 5' incision. This is UvrABC system protein C from Bacillus cereus (strain B4264).